The primary structure comprises 483 residues: Glutamyl-tRNA(Gln) amidotransferase subunit A (483 aa).

Active-site charge relay system residues include Lys-75 and Ser-150. The active-site Acyl-ester intermediate is Ser-174.

This sequence belongs to the amidase family. GatA subfamily. Heterotrimer of A, B and C subunits.

The catalysed reaction is L-glutamyl-tRNA(Gln) + L-glutamine + ATP + H2O = L-glutaminyl-tRNA(Gln) + L-glutamate + ADP + phosphate + H(+). Functionally, allows the formation of correctly charged Gln-tRNA(Gln) through the transamidation of misacylated Glu-tRNA(Gln) in organisms which lack glutaminyl-tRNA synthetase. The reaction takes place in the presence of glutamine and ATP through an activated gamma-phospho-Glu-tRNA(Gln). The polypeptide is Glutamyl-tRNA(Gln) amidotransferase subunit A (Deinococcus geothermalis (strain DSM 11300 / CIP 105573 / AG-3a)).